The sequence spans 218 residues: Pyridoxal phosphate homeostasis protein (218 aa).

K25 carries the post-translational modification N6-(pyridoxal phosphate)lysine.

The protein belongs to the pyridoxal phosphate-binding protein YggS/PROSC family.

Pyridoxal 5'-phosphate (PLP)-binding protein, which is involved in PLP homeostasis. This chain is Pyridoxal phosphate homeostasis protein, found in Synechocystis sp. (strain ATCC 27184 / PCC 6803 / Kazusa).